The primary structure comprises 508 residues: UTP--glucose-1-phosphate uridylyltransferase (508 aa).

Ser-2 carries the blocked amino end (Ser) modification. At Ser-13 the chain carries Phosphoserine. UTP is bound by residues 113–116 (LNGG), Lys-127, Gln-190, and Gly-222. Position 115–116 (115–116 (GG)) interacts with substrate. Lys-127 is a Mg(2+) binding site. Substrate contacts are provided by residues His-223 and 251–253 (NID). Asp-253 and Lys-396 together coordinate UTP. Mg(2+) is bound at residue Asp-253. The active site involves Lys-396. Thr-426 bears the Phosphothreonine mark. At Ser-434 the chain carries Phosphoserine. Lys-438 bears the N6-acetyllysine mark. A phosphoserine mark is found at Ser-448 and Ser-461. An oligomerization region spans residues 457–508 (HLTVSGDVTFGKNVSLKGTVIIIANHGDRIDIPPGAVLENKIVSGNLRILDH). Residues 502-503 (NL) form a critical for end-to-end subunit interaction region.

The protein belongs to the UDPGP type 1 family. In terms of assembly, homooctamer.

The protein resides in the cytoplasm. The enzyme catalyses alpha-D-glucose 1-phosphate + UTP + H(+) = UDP-alpha-D-glucose + diphosphate. It functions in the pathway glycan biosynthesis; glycogen biosynthesis. In terms of biological role, UTP--glucose-1-phosphate uridylyltransferase catalyzing the conversion of glucose-1-phosphate into UDP-glucose, a crucial precursor for the production of glycogen. This chain is UTP--glucose-1-phosphate uridylyltransferase (UGP2), found in Bos taurus (Bovine).